The primary structure comprises 577 residues: 2-succinyl-5-enolpyruvyl-6-hydroxy-3-cyclohexene-1-carboxylate synthase (577 aa).

Belongs to the TPP enzyme family. MenD subfamily. In terms of assembly, homodimer. Mg(2+) serves as cofactor. It depends on Mn(2+) as a cofactor. Requires thiamine diphosphate as cofactor.

It carries out the reaction isochorismate + 2-oxoglutarate + H(+) = 5-enolpyruvoyl-6-hydroxy-2-succinyl-cyclohex-3-ene-1-carboxylate + CO2. Its pathway is quinol/quinone metabolism; 1,4-dihydroxy-2-naphthoate biosynthesis; 1,4-dihydroxy-2-naphthoate from chorismate: step 2/7. It functions in the pathway quinol/quinone metabolism; menaquinone biosynthesis. Its function is as follows. Catalyzes the thiamine diphosphate-dependent decarboxylation of 2-oxoglutarate and the subsequent addition of the resulting succinic semialdehyde-thiamine pyrophosphate anion to isochorismate to yield 2-succinyl-5-enolpyruvyl-6-hydroxy-3-cyclohexene-1-carboxylate (SEPHCHC). This is 2-succinyl-5-enolpyruvyl-6-hydroxy-3-cyclohexene-1-carboxylate synthase from Enterococcus faecalis (strain ATCC 700802 / V583).